The following is a 254-amino-acid chain: Isoprenyl transferase (254 aa).

Residue aspartate 34 is part of the active site. Aspartate 34 is a binding site for Mg(2+). Substrate is bound by residues 35 to 38, tryptophan 39, arginine 47, histidine 51, and 79 to 81; these read GNGR and STE. Residue asparagine 82 is the Proton acceptor of the active site. Substrate is bound by residues tryptophan 83, arginine 85, arginine 202, and 208–210; that span reads RIS. Glutamate 221 provides a ligand contact to Mg(2+).

Belongs to the UPP synthase family. Homodimer. Requires Mg(2+) as cofactor.

Functionally, catalyzes the condensation of isopentenyl diphosphate (IPP) with allylic pyrophosphates generating different type of terpenoids. The polypeptide is Isoprenyl transferase (Staphylococcus saprophyticus subsp. saprophyticus (strain ATCC 15305 / DSM 20229 / NCIMB 8711 / NCTC 7292 / S-41)).